An 871-amino-acid polypeptide reads, in one-letter code: Nonsense-mediated mRNA decay factor SMG8 (871 aa).

A disordered region spans residues 541-596 (LDDMELPESLQQSYTSSEDSSEDDDDFAIQTASSEDSLSGSDSYARPGSRRDEFES). Residues 573–583 (SSEDSLSGSDS) are compositionally biased toward low complexity.

The protein belongs to the SMG8 family.

In terms of biological role, involved in nonsense-mediated decay (NMD) of mRNAs containing premature stop codons. Probable component of kinase complex containing smg-1 and recruited to stalled ribosomes. This Caenorhabditis briggsae protein is Nonsense-mediated mRNA decay factor SMG8 (smg-8).